Reading from the N-terminus, the 181-residue chain is ADP-ribosylation factor 2-A (181 aa).

Residue glycine 2 is the site of N-myristoyl glycine attachment. GTP is bound by residues 24 to 31, 67 to 71, and 126 to 129; these read GLDAAGKT, DVGGQ, and NKQD.

It belongs to the small GTPase superfamily. Arf family.

Its subcellular location is the golgi apparatus. Its activity is regulated as follows. Activated by AGD10. GTP-binding protein involved in protein trafficking; may modulate vesicle budding and uncoating within the Golgi apparatus. The protein is ADP-ribosylation factor 2-A (ARF2-A) of Arabidopsis thaliana (Mouse-ear cress).